The chain runs to 756 residues: Protein SDA1 homolog (756 aa).

A coiled-coil region spans residues E227–Q282. Acidic residues-rich tracts occupy residues A494 to E514 and A521 to E596. 2 disordered regions span residues A494–T615 and A638–H756. Basic and acidic residues predominate over residues Q605–T615. Residues D647–G656 show a composition bias toward acidic residues. The span at E677–D691 shows a compositional bias: basic and acidic residues. The segment covering K725–K735 has biased composition (basic residues). Residues S736–A749 are compositionally biased toward basic and acidic residues.

It belongs to the SDA1 family.

Its subcellular location is the nucleus. The protein localises to the nucleolus. Its function is as follows. Required for 60S pre-ribosomal subunits export to the cytoplasm. This is Protein SDA1 homolog (sdad1) from Dictyostelium discoideum (Social amoeba).